We begin with the raw amino-acid sequence, 404 residues long: Cysteine desulfurase IscS (404 aa).

Residues 75-76, Asn-155, Gln-183, and 203-205 contribute to the pyridoxal 5'-phosphate site; these read AT and SGH. Lys-206 is modified (N6-(pyridoxal phosphate)lysine). Residue Thr-243 participates in pyridoxal 5'-phosphate binding. Catalysis depends on Cys-328, which acts as the Cysteine persulfide intermediate. Cys-328 lines the [2Fe-2S] cluster pocket.

Belongs to the class-V pyridoxal-phosphate-dependent aminotransferase family. NifS/IscS subfamily. In terms of assembly, homodimer. Forms a heterotetramer with IscU, interacts with other sulfur acceptors. Pyridoxal 5'-phosphate serves as cofactor.

Its subcellular location is the cytoplasm. It catalyses the reaction (sulfur carrier)-H + L-cysteine = (sulfur carrier)-SH + L-alanine. It functions in the pathway cofactor biosynthesis; iron-sulfur cluster biosynthesis. Its function is as follows. Master enzyme that delivers sulfur to a number of partners involved in Fe-S cluster assembly, tRNA modification or cofactor biosynthesis. Catalyzes the removal of elemental sulfur atoms from cysteine to produce alanine. Functions as a sulfur delivery protein for Fe-S cluster synthesis onto IscU, an Fe-S scaffold assembly protein, as well as other S acceptor proteins. The polypeptide is Cysteine desulfurase IscS (Mannheimia succiniciproducens (strain KCTC 0769BP / MBEL55E)).